Reading from the N-terminus, the 370-residue chain is Serine O-succinyltransferase (370 aa).

In terms of domain architecture, AB hydrolase-1 spans 46-355 (AILIVTGLSP…PQGHDAFLVD (310 aa)). Residues 52 to 55 (GLSP) form an important for substrate specificity region. Catalysis depends on S149, which acts as the Nucleophile. R218 provides a ligand contact to substrate. Residues D316 and H349 contribute to the active site. D350 is a substrate binding site.

It belongs to the AB hydrolase superfamily. MetX family. In terms of assembly, homodimer.

It is found in the cytoplasm. The enzyme catalyses succinyl-CoA + L-serine = O-succinyl-L-serine + CoA. It carries out the reaction L-homoserine + succinyl-CoA = O-succinyl-L-homoserine + CoA. It functions in the pathway amino-acid biosynthesis; L-cysteine biosynthesis; L-cysteine from L-serine: step 1/2. Its function is as follows. Transfers a succinyl group from succinyl-CoA to L-serine, forming succinyl-L-serine. In vitro, also has homoserine succinyl transferase activity. The polypeptide is Serine O-succinyltransferase (Stenotrophomonas maltophilia (Pseudomonas maltophilia)).